The chain runs to 192 residues: Crossover junction endodeoxyribonuclease RuvC (192 aa).

Catalysis depends on residues Asp-7, Glu-67, and Asp-140. Mg(2+) contacts are provided by Asp-7, Glu-67, and Asp-140. Residues 158-192 (RQSGVPPRTNSRRKSGTGGSWEQFVRQSPNVVVRS) are disordered. Polar residues predominate over residues 182–192 (VRQSPNVVVRS).

The protein belongs to the RuvC family. As to quaternary structure, homodimer which binds Holliday junction (HJ) DNA. The HJ becomes 2-fold symmetrical on binding to RuvC with unstacked arms; it has a different conformation from HJ DNA in complex with RuvA. In the full resolvosome a probable DNA-RuvA(4)-RuvB(12)-RuvC(2) complex forms which resolves the HJ. It depends on Mg(2+) as a cofactor.

Its subcellular location is the cytoplasm. The enzyme catalyses Endonucleolytic cleavage at a junction such as a reciprocal single-stranded crossover between two homologous DNA duplexes (Holliday junction).. In terms of biological role, the RuvA-RuvB-RuvC complex processes Holliday junction (HJ) DNA during genetic recombination and DNA repair. Endonuclease that resolves HJ intermediates. Cleaves cruciform DNA by making single-stranded nicks across the HJ at symmetrical positions within the homologous arms, yielding a 5'-phosphate and a 3'-hydroxyl group; requires a central core of homology in the junction. The consensus cleavage sequence is 5'-(A/T)TT(C/G)-3'. Cleavage occurs on the 3'-side of the TT dinucleotide at the point of strand exchange. HJ branch migration catalyzed by RuvA-RuvB allows RuvC to scan DNA until it finds its consensus sequence, where it cleaves and resolves the cruciform DNA. The protein is Crossover junction endodeoxyribonuclease RuvC of Chlorobium chlorochromatii (strain CaD3).